A 104-amino-acid chain; its full sequence is Large ribosomal subunit protein uL23 (104 aa).

It belongs to the universal ribosomal protein uL23 family. As to quaternary structure, part of the 50S ribosomal subunit. Contacts protein L29, and trigger factor when it is bound to the ribosome.

Functionally, one of the early assembly proteins it binds 23S rRNA. One of the proteins that surrounds the polypeptide exit tunnel on the outside of the ribosome. Forms the main docking site for trigger factor binding to the ribosome. The chain is Large ribosomal subunit protein uL23 from Polynucleobacter necessarius subsp. necessarius (strain STIR1).